A 421-amino-acid polypeptide reads, in one-letter code: UDP-N-acetylglucosamine 1-carboxyvinyltransferase (421 aa).

23–24 (KN) is a phosphoenolpyruvate binding site. R92 serves as a coordination point for UDP-N-acetyl-alpha-D-glucosamine. C116 functions as the Proton donor in the catalytic mechanism. C116 carries the 2-(S-cysteinyl)pyruvic acid O-phosphothioketal modification. UDP-N-acetyl-alpha-D-glucosamine is bound by residues 121-125 (RPVDL), 161-164 (KVSV), D306, and I328.

The protein belongs to the EPSP synthase family. MurA subfamily.

The protein localises to the cytoplasm. It catalyses the reaction phosphoenolpyruvate + UDP-N-acetyl-alpha-D-glucosamine = UDP-N-acetyl-3-O-(1-carboxyvinyl)-alpha-D-glucosamine + phosphate. It participates in cell wall biogenesis; peptidoglycan biosynthesis. Functionally, cell wall formation. Adds enolpyruvyl to UDP-N-acetylglucosamine. This chain is UDP-N-acetylglucosamine 1-carboxyvinyltransferase, found in Vibrio campbellii (strain ATCC BAA-1116).